The primary structure comprises 4074 residues: Fibrocystin (4074 aa).

Positions 1-22 (MIVWLISLMSIEILLLAGPALS) are cleaved as a signal peptide. 2 N-linked (GlcNAc...) asparagine glycosylation sites follow: N54 and N224. The 53-residue stretch at 258–310 (EILSVFPETGSLGGKTDIIITGDFFDNPALVTIAGVPCDIRHMSPRKIECTTR) folds into the IPT/TIG 1 domain. The 161-residue stretch at 323 to 483 (AGNRGLLFEV…TWLNPDVVST (161 aa)) folds into the PA14 domain. N-linked (GlcNAc...) asparagine glycosylation is found at N355, N385, N518, N527, N640, N710, N741, N822, N829, N868, N953, N966, N976, N1006, N1059, N1083, N1115, N1134, N1233, N1240, N1274, N1284, N1308, N1319, N1342, N1373, N1445, N1456, N1471, N1490, N1528, N1560, N1578, N1598, N1627, N1694, N1760, N1775, N1789, N1875, N1915, N1941, N1955, N2030, N2111, and N2140. Residues 944 to 1000 (SLLIYIFGINFSGDPQALEIMVNKTNCKVIFSNQTNVICQTDLLPVGMHRLFMVVRP) enclose the IPT/TIG 2 domain. 3 consecutive IPT/TIG domains span residues 1018-1101 (PRLD…AFTY), 1107-1186 (PVIT…RSPG), and 1199-1274 (SIEP…WAGN). Positions 1385–1464 (PWIMAISPTH…LNVTVIVNGL (80 aa)) constitute an IPT/TIG 6 domain. Residues 1573 to 1641 (HYFPKNFSIH…LVIEVDGLSY (69 aa)) enclose the IPT/TIG 7 domain. In terms of domain architecture, G8 1 spans 1928-2049 (HSWFPERVPQ…PEVTFTHLQA (122 aa)). 5 PbH1 repeats span residues 2245–2267 (TLGLKVDSNIFYNILGHALLVGT), 2288–2322 (EQGNIIRNNVIISISGTEGLSSPEMLTPSGIYILN), 2351–2373 (APLLSFTQNIAHSCTRYGLFIYP), 2383–2404 (RGPTLFQNFTVWGSAGGARISR), and 2405–2427 (SSNLHLKNFQVYSCRDFGIDILE). N-linked (GlcNAc...) asparagine glycosylation occurs at N2390. 10 N-linked (GlcNAc...) asparagine glycosylation sites follow: N2431, N2467, N2531, N2549, N2579, N2591, N2749, N2764, N2972, and N3004. The PbH1 6 repeat unit spans residues 2460-2483 (RWELIISNTTFVNFDLTDCVSIRT). In terms of domain architecture, G8 2 spans 2743 to 2869 (EGWGGHNHTI…PKKSWTRLAA (127 aa)). One copy of the PbH1 7 repeat lies at 3029–3051 (SHGIILNDNIVFGTVGHGIDLEG). An N-linked (GlcNAc...) asparagine glycan is attached at N3053. The PbH1 8 repeat unit spans residues 3082-3104 (AKDINLYGNVVAGSERIGFHIQG). Residues N3136, N3165, N3221, N3484, N3702, N3721, and N3833 are each glycosylated (N-linked (GlcNAc...) asparagine). The PbH1 9 repeat unit spans residues 3158–3183 (ENSVEIENITLVDNSIGLLATVYVSS). The helical transmembrane segment at 3854–3874 (IILAVSLCSVASWLALCCLVC) threads the bilayer. The segment at 3871–3888 (CLVCCWFRKSKSRKIKSE) is ciliary targeting sequence (CST). Disordered regions lie at residues 3896-3919 (NDQKSHIHMSSKHPRSQETKKEDT), 3943-3965 (NGVSRRKVSRRAVREEGSSREED), and 4031-4074 (LQGQ…QEQL). Composition is skewed to basic and acidic residues over residues 3910-3919 (RSQETKKEDT) and 3954-3965 (AVREEGSSREED). The tract at residues 3947 to 3976 (RRKVSRRAVREEGSSREEDVVPAPRIISIT) is nuclear localization signal (NLS).

As to quaternary structure, interacts with CAMLG. Interacts with PKD2. Interacts (via CST) with ARF4; this interaction allows an efficient PKHD1 trafficking to the cilium. Interacts (via CST) with RAB8A; this interaction controls trafficking through the endomembrane systeme and to the cilium. Interacts (via CST) with TULP3; this interaction allows PKHD1 trafficking to the cilium. Post-translationally, palmitoylated. Palmitoylation facilitates the trafficking to the cilia and membrane targeting. In terms of processing, N-glycosylated. Several proteolytic cleavages occur within the extracellular domain, whereas at least one cleavage occurs within the cytoplasmic domain. Cleaved by a probable proprotein convertase which produces an extracellular domain (polyductin extracellular domain, (PECD)) and a C-terminal fragment (polyductin transmembrane fragment (PTM)) which are tethered together by disulfide bonds. This extracellular domain (PECD) is then shed from the primary cilium by activation of a member of the ADAM metalloproteinase disintegrins family, resulting in concomitant release of an intra-cellular C-terminal fragment (ICD) via a gamma-secretase-dependent process. The proteolytic cleavage of the C-terminal intracellular fragment (ICD) is controlled by cytosolic calcium concentration and activation of PKC.

The protein resides in the cell membrane. It localises to the cytoplasm. It is found in the apical cell membrane. The protein localises to the cytoskeleton. Its subcellular location is the cilium basal body. The protein resides in the cell projection. It localises to the cilium. It is found in the spindle. The protein localises to the chromosome. Its subcellular location is the centromere. The protein resides in the nucleus. It localises to the secreted. It is found in the extracellular exosome. The protein localises to the endoplasmic reticulum. Its subcellular location is the golgi apparatus. In terms of biological role, promotes ciliogenesis in renal epithelial cells and therefore participates in the tubules formation and/ or ensures the maintenance of the architecture of the lumen of the kidney. Has an impact on cellular symmetry by ensuring correct bipolar cell division through the regulation of centrosome duplication and mitotic spindle assembly and by maintaining oriented cell division (OCD) during tubular elongation through planar cell polarity (PCP) pathway. During epithelial cell morphogenesis, it also regulates cell-cell and cell-matrix adhesion and participates in cell motility. Promotes cell-cell contact through the positive regulation of PTK2 kinase activity leading to either positive regulation of epithelial cell proliferation through the HRAS/RAF1 pathways, or negative regulation of apoptosis through the PDK1/AKT1 pathway. May act in collecting-duct and biliary differentiation. May participate in the regulation of the cholangiocytes proliferation and the CCN2 production in an CXCL8-dependent manner. This is Fibrocystin from Canis lupus familiaris (Dog).